A 257-amino-acid polypeptide reads, in one-letter code: Acetylglutamate kinase (257 aa).

Substrate-binding positions include 41–42, Arg63, and Asn158; that span reads GG.

The protein belongs to the acetylglutamate kinase family. ArgB subfamily.

The protein localises to the cytoplasm. The enzyme catalyses N-acetyl-L-glutamate + ATP = N-acetyl-L-glutamyl 5-phosphate + ADP. It participates in amino-acid biosynthesis; L-arginine biosynthesis; N(2)-acetyl-L-ornithine from L-glutamate: step 2/4. Catalyzes the ATP-dependent phosphorylation of N-acetyl-L-glutamate. The protein is Acetylglutamate kinase of Phocaeicola vulgatus (strain ATCC 8482 / DSM 1447 / JCM 5826 / CCUG 4940 / NBRC 14291 / NCTC 11154) (Bacteroides vulgatus).